Consider the following 435-residue polypeptide: Eukaryotic peptide chain release factor subunit 1-2 (435 aa).

At Ala-2 the chain carries N-acetylalanine.

It belongs to the eukaryotic release factor 1 family. Heterodimer of two subunits, one of which binds GTP. Interacts with OR.

It is found in the cytoplasm. Its function is as follows. Directs the termination of nascent peptide synthesis (translation) in response to the termination codons UAA, UAG and UGA. Modulates plant growth and development. The protein is Eukaryotic peptide chain release factor subunit 1-2 of Brassica oleracea var. botrytis (Cauliflower).